The sequence spans 348 residues: DnaJ homolog subfamily B member 5 (348 aa).

The 65-residue stretch at 4–68 (DYYKILGIPS…KKRGLYDQYG (65 aa)) folds into the J domain.

The protein is DnaJ homolog subfamily B member 5 (DNAJB5) of Bos taurus (Bovine).